Reading from the N-terminus, the 193-residue chain is Transmembrane protein 066L (193 aa).

The next 2 membrane-spanning stretches (helical) occupy residues 14-34 (VLFATLLVGSALVFPVGGLVW) and 48-68 (LVVEQHPHVGFALQLLALVVV).

This sequence belongs to the IIV-6 357R family.

The protein resides in the membrane. The chain is Transmembrane protein 066L from Invertebrate iridescent virus 3 (IIV-3).